A 442-amino-acid chain; its full sequence is UDP-glycosyltransferase 79B8 (442 aa).

UDP-alpha-D-glucose is bound by residues serine 260, valine 319–glutamine 321, histidine 336–glutamate 344, and leucine 358–glutamine 361.

It belongs to the UDP-glycosyltransferase family.

This Arabidopsis thaliana (Mouse-ear cress) protein is UDP-glycosyltransferase 79B8 (UGT79B8).